The primary structure comprises 304 residues: Polyisoprenyl-teichoic acid--peptidoglycan teichoic acid transferase TagU (304 aa).

At 1–4 (MKKK) the chain is on the cytoplasmic side. The chain crosses the membrane as a helical; Signal-anchor for type II membrane protein span at residues 5 to 25 (ILFWILGIIGIMIIGGGVYAY). The Extracellular portion of the chain corresponds to 26 to 304 (NVYSSVSKTL…KLRAHLELTK (279 aa)).

This sequence belongs to the LytR/CpsA/Psr (LCP) family.

The protein resides in the cell membrane. It functions in the pathway cell wall biogenesis. Functionally, may catalyze the final step in cell wall teichoic acid biosynthesis, the transfer of the anionic cell wall polymers (APs) from their lipid-linked precursor to the cell wall peptidoglycan (PG). The chain is Polyisoprenyl-teichoic acid--peptidoglycan teichoic acid transferase TagU from Bacillus mycoides (strain KBAB4) (Bacillus weihenstephanensis).